The primary structure comprises 111 residues: Universal stress protein B (111 aa).

The next 2 membrane-spanning stretches (helical) occupy residues 1 to 21 (MFST…NMMR) and 90 to 110 (FILT…MLIW).

It belongs to the universal stress protein B family.

It is found in the cell inner membrane. The protein is Universal stress protein B of Photorhabdus laumondii subsp. laumondii (strain DSM 15139 / CIP 105565 / TT01) (Photorhabdus luminescens subsp. laumondii).